Consider the following 651-residue polypeptide: Transcription factor E2-alpha (651 aa).

3 disordered regions span residues 32–107 (ANGK…SERN), 131–208 (LSLS…KTPS), and 341–378 (DHSS…ALSP). 3 stretches are compositionally biased toward low complexity: residues 56–73 (SSGS…FDPS), 131–148 (LSLS…KSSS), and 341–354 (DHSS…PSTP). Phosphoserine occurs at positions 135 and 140. Threonine 353 carries the post-translational modification Phosphothreonine. Serine 357 is modified (phosphoserine). Arginine 369 carries the post-translational modification Omega-N-methylarginine. At serine 377 the chain carries Phosphoserine. Positions 387-422 (LSKMEDRLDEAIHVLRSHAVGTASDLHGLLPGHGAL) are leucine-zipper. A disordered region spans residues 457–549 (HNHASLPSQP…KAEREKERRV (93 aa)). Over residues 461–479 (SLPSQPSSLPDLSQRPPDS) the composition is skewed to low complexity. Residue lysine 496 forms a Glycyl lysine isopeptide (Lys-Gly) (interchain with G-Cter in SUMO2) linkage. Phosphoserine is present on serine 526. Position 528 is a phosphothreonine (aspartate 528). Aspartate 533 is subject to Phosphoserine. Positions 539–549 (QKAEREKERRV) are enriched in basic and acidic residues. A bHLH domain is found at 546 to 599 (ERRVANNARERLRVRDINEAFKELGRMCQLHLSSEKPQTKLLILHQAVAVILSL). Lysine 622 participates in a covalent cross-link: Glycyl lysine isopeptide (Lys-Gly) (interchain with G-Cter in SUMO2).

As to quaternary structure, homodimer. Heterodimer; efficient DNA binding requires dimerization with another bHLH protein. Forms a heterodimer with TWIST1 and TWIST2. Forms a heterodimer with NEUROD1; the heterodimer is inhibited in presence of ID2, but not NR0B2, to E-box element. Forms a heterodimer with TCF15; the heterodimer binds E-box element. Forms a heterodimer with MYOG; heterodimerization enhances MYOG DNA-binding and transcriptional activities. Forms a heterodimer with ATOH8; repress transcription of TCF3 and TCF3-NEUROG3 dimer-induced transactivation of E box-dependent promoters. Component of a nuclear TAL-1 complex composed at least of CBFA2T3, LDB1, TAL1 and TCF3. Interacts with NEUROD2. Interacts with EP300. Interacts with PTF1A, TGFB1I1 and UBE2I. Interacts with BHLHA9. Interacts with ASB2; the interaction is mediated by SKP2 and targets TCF3 for Notch-induced proteasomal degradation. Interacts with transcription factor ASCL5/AmeloD. Forms a heterodimer with ATOH7; required for ATOH7 DNA-binding. In terms of assembly, interacts with RALGAPA1. Interacts with FIGLA. Post-translationally, phosphorylated following NGF stimulation. Undergoes Notch-induced ubiquitination and subsequent proteasomal degradation which is mediated by ASB1 or ASB2, the substrate-recognition components of probable ECS E3 ubiquitin-protein ligase complexes.

The protein localises to the nucleus. In terms of biological role, transcriptional regulator involved in the initiation of neuronal differentiation and mesenchymal to epithelial transition. Heterodimers between TCF3 and tissue-specific basic helix-loop-helix (bHLH) proteins play major roles in determining tissue-specific cell fate during embryogenesis, like muscle or early B-cell differentiation. Together with TCF15, required for the mesenchymal to epithelial transition. Dimers bind DNA on E-box motifs: 5'-CANNTG-3'. Binds to the kappa-E2 site in the kappa immunoglobulin gene enhancer. Binds to IEB1 and IEB2, which are short DNA sequences in the insulin gene transcription control region. Facilitates ATOH7 binding to DNA at the consensus sequence 5'-CAGGTG-3', and positively regulates transcriptional activity. This is Transcription factor E2-alpha (Tcf3) from Mus musculus (Mouse).